We begin with the raw amino-acid sequence, 64 residues long: Large ribosomal subunit protein bL33 (64 aa).

This sequence belongs to the bacterial ribosomal protein bL33 family.

This is Large ribosomal subunit protein bL33 from Synechococcus elongatus (strain ATCC 33912 / PCC 7942 / FACHB-805) (Anacystis nidulans R2).